Here is an 87-residue protein sequence, read N- to C-terminus: Cell division topological specificity factor (87 aa).

Belongs to the MinE family.

Its function is as follows. Prevents the cell division inhibition by proteins MinC and MinD at internal division sites while permitting inhibition at polar sites. This ensures cell division at the proper site by restricting the formation of a division septum at the midpoint of the long axis of the cell. This is Cell division topological specificity factor from Vibrio parahaemolyticus serotype O3:K6 (strain RIMD 2210633).